Here is a 659-residue protein sequence, read N- to C-terminus: Exoribonuclease 2 (659 aa).

The 343-residue stretch at 189-531 (RENLTALHFV…NHRLIKAVLA (343 aa)) folds into the RNB domain. One can recognise an S1 motif domain in the interval 576 to 658 (NAEFEAEVQD…ATRSIVGEIL (83 aa)).

Belongs to the RNR ribonuclease family. RNase II subfamily.

The protein resides in the cytoplasm. The catalysed reaction is Exonucleolytic cleavage in the 3'- to 5'-direction to yield nucleoside 5'-phosphates.. Involved in mRNA degradation. Hydrolyzes single-stranded polyribonucleotides processively in the 3' to 5' direction. In Haemophilus influenzae (strain PittGG), this protein is Exoribonuclease 2.